Reading from the N-terminus, the 260-residue chain is UPF0246 protein BceJ2315_22780 (260 aa).

This sequence belongs to the UPF0246 family.

This Burkholderia cenocepacia (strain ATCC BAA-245 / DSM 16553 / LMG 16656 / NCTC 13227 / J2315 / CF5610) (Burkholderia cepacia (strain J2315)) protein is UPF0246 protein BceJ2315_22780.